We begin with the raw amino-acid sequence, 160 residues long: Cytochrome b6-f complex subunit 4 (160 aa).

3 consecutive transmembrane segments (helical) span residues 36–56 (LLYT…GLAV), 95–115 (LLGI…PFIE), and 127–147 (PIAM…GVAA).

Belongs to the cytochrome b family. PetD subfamily. As to quaternary structure, the 4 large subunits of the cytochrome b6-f complex are cytochrome b6, subunit IV (17 kDa polypeptide, PetD), cytochrome f and the Rieske protein, while the 4 small subunits are PetG, PetL, PetM and PetN. The complex functions as a dimer.

The protein localises to the cellular thylakoid membrane. Its function is as follows. Component of the cytochrome b6-f complex, which mediates electron transfer between photosystem II (PSII) and photosystem I (PSI), cyclic electron flow around PSI, and state transitions. The chain is Cytochrome b6-f complex subunit 4 from Prochlorothrix hollandica.